A 443-amino-acid polypeptide reads, in one-letter code: Nuclear distribution protein nudF (443 aa).

The LisH domain maps to 9 to 41 (QAEELHKSIIAYLSSINASRSCEVLREELQVDS). The stretch at 60 to 87 (TGIARLQKKILDLESKLAGLQTELDTIS) forms a coiled coil. 8 WD repeats span residues 111 to 152 (SHRD…RTLK), 154 to 194 (HMRP…ANVR), 198 to 238 (GHDH…CVKV), 241 to 280 (SQGS…SVAS), 283 to 343 (GHEN…IKTL), 345 to 384 (GHDN…RLVK), 388 to 427 (AHGH…PGFQ), and 429 to 443 (VIAT…RIFT).

The protein belongs to the WD repeat LIS1/nudF family. As to quaternary structure, self-associates. Interacts with nudE and dynein.

The protein localises to the cytoplasm. It localises to the cytoskeleton. It is found in the spindle pole. In terms of biological role, positively regulates the activity of the minus-end directed microtubule motor protein dynein. May enhance dynein-mediated microtubule sliding by targeting dynein to the microtubule plus end. Required for nuclear migration during vegetative growth as well as development. Required for retrograde early endosome (EE) transport from the hyphal tip. Required for localization of dynein to the mitotic spindle poles. Recruits additional proteins to the dynein complex at SPBs. This Aspergillus niger (strain ATCC MYA-4892 / CBS 513.88 / FGSC A1513) protein is Nuclear distribution protein nudF.